The chain runs to 57 residues: Large ribosomal subunit protein eL20 (57 aa).

Residues 1–10 are compositionally biased toward polar residues; it reads MSEFTVTGTF. The segment at 1–21 is disordered; the sequence is MSEFTVTGTFESRDGNQPFEK.

It belongs to the eukaryotic ribosomal protein eL20 family. As to quaternary structure, part of the 50S ribosomal subunit. Binds 23S rRNA.

This Halomicrobium mukohataei (strain ATCC 700874 / DSM 12286 / JCM 9738 / NCIMB 13541) (Haloarcula mukohataei) protein is Large ribosomal subunit protein eL20.